The chain runs to 211 residues: Thiamine-phosphate synthase (211 aa).

Residues 37-41 (QLRIK) and Asn69 contribute to the 4-amino-2-methyl-5-(diphosphooxymethyl)pyrimidine site. Residues Asp70 and Asp89 each coordinate Mg(2+). Ser108 contacts 4-amino-2-methyl-5-(diphosphooxymethyl)pyrimidine. 134–136 (TQT) is a binding site for 2-[(2R,5Z)-2-carboxy-4-methylthiazol-5(2H)-ylidene]ethyl phosphate. Residue Lys137 participates in 4-amino-2-methyl-5-(diphosphooxymethyl)pyrimidine binding. Residues Gly166 and 186–187 (IS) each bind 2-[(2R,5Z)-2-carboxy-4-methylthiazol-5(2H)-ylidene]ethyl phosphate.

The protein belongs to the thiamine-phosphate synthase family. The cofactor is Mg(2+).

The catalysed reaction is 2-[(2R,5Z)-2-carboxy-4-methylthiazol-5(2H)-ylidene]ethyl phosphate + 4-amino-2-methyl-5-(diphosphooxymethyl)pyrimidine + 2 H(+) = thiamine phosphate + CO2 + diphosphate. It catalyses the reaction 2-(2-carboxy-4-methylthiazol-5-yl)ethyl phosphate + 4-amino-2-methyl-5-(diphosphooxymethyl)pyrimidine + 2 H(+) = thiamine phosphate + CO2 + diphosphate. The enzyme catalyses 4-methyl-5-(2-phosphooxyethyl)-thiazole + 4-amino-2-methyl-5-(diphosphooxymethyl)pyrimidine + H(+) = thiamine phosphate + diphosphate. It participates in cofactor biosynthesis; thiamine diphosphate biosynthesis; thiamine phosphate from 4-amino-2-methyl-5-diphosphomethylpyrimidine and 4-methyl-5-(2-phosphoethyl)-thiazole: step 1/1. Functionally, condenses 4-methyl-5-(beta-hydroxyethyl)thiazole monophosphate (THZ-P) and 2-methyl-4-amino-5-hydroxymethyl pyrimidine pyrophosphate (HMP-PP) to form thiamine monophosphate (TMP). This Shigella boydii serotype 4 (strain Sb227) protein is Thiamine-phosphate synthase.